The primary structure comprises 635 residues: Threonine--tRNA ligase (635 aa).

One can recognise a TGS domain in the interval 1–62 (MITITLPDGS…EHDAMLRIIT (62 aa)). A catalytic region spans residues 244 to 535 (DHRKIGKVQD…LIEHYAGIWP (292 aa)). Residues Cys-335, His-386, and His-512 each coordinate Zn(2+).

Belongs to the class-II aminoacyl-tRNA synthetase family. Homodimer. Zn(2+) serves as cofactor.

Its subcellular location is the cytoplasm. It catalyses the reaction tRNA(Thr) + L-threonine + ATP = L-threonyl-tRNA(Thr) + AMP + diphosphate + H(+). Its function is as follows. Catalyzes the attachment of threonine to tRNA(Thr) in a two-step reaction: L-threonine is first activated by ATP to form Thr-AMP and then transferred to the acceptor end of tRNA(Thr). Also edits incorrectly charged L-seryl-tRNA(Thr). This Xylella fastidiosa (strain 9a5c) protein is Threonine--tRNA ligase.